The following is a 507-amino-acid chain: Cytochrome P450 7B1 (507 aa).

A run of 3 helical transmembrane segments spans residues 14–34, 178–198, and 287–307; these read PLAL…LFLL, IFAF…YGKI, and FLWA…YYIL. Cys-447 is a heme binding site.

This sequence belongs to the cytochrome P450 family. Requires heme as cofactor. In terms of tissue distribution, highly expressed in brain structures including the corpus callosum, the anterior commissure and fornix. The hippocampal expression is particularly prominent in the dentate gyrus. Expressed in liver and kidney. The hepatic expression is sexually dimorphic, predominantly detected in male liver while barely detectable in females. Expressed in lymph nodes and spleens, in both lymphoid and stromal compartments. Higher expression is detected in fibroblastic reticular cells, a type of stromal cells in the lymph nodes. Also expressed at high levels in the outer follicle and at the B cell-T cell boundary of splenic germinal centers. Expressed in dendritic cells (DCs) subpopulations being most abundant in CD8-positive DCs.

It localises to the endoplasmic reticulum membrane. The protein localises to the microsome membrane. It carries out the reaction 25-hydroxycholesterol + reduced [NADPH--hemoprotein reductase] + O2 = 7alpha,25-dihydroxycholesterol + oxidized [NADPH--hemoprotein reductase] + H2O + H(+). The catalysed reaction is (25R)-cholest-5-ene-3beta,26-diol + reduced [NADPH--hemoprotein reductase] + O2 = (25R)-cholest-5-en-3beta,7alpha,26-triol + oxidized [NADPH--hemoprotein reductase] + H2O + H(+). The enzyme catalyses (24S)-hydroxycholesterol + reduced [NADPH--hemoprotein reductase] + O2 = (24S)-7alpha-dihydroxycholesterol + oxidized [NADPH--hemoprotein reductase] + H2O + H(+). It catalyses the reaction (24S)-25-epoxycholesterol + reduced [NADPH--hemoprotein reductase] + O2 = (24S,25)-epoxy-7alpha-hydroxycholesterol + oxidized [NADPH--hemoprotein reductase] + H2O + H(+). It carries out the reaction (22R)-hydroxycholesterol + reduced [NADPH--hemoprotein reductase] + O2 = (22R,7alpha)-dihydroxycholesterol + oxidized [NADPH--hemoprotein reductase] + H2O + H(+). The catalysed reaction is androst-5-en-3beta,17beta-diol + reduced [NADPH--hemoprotein reductase] + O2 = androst-5-en-3beta,7alpha,17beta-triol + oxidized [NADPH--hemoprotein reductase] + H2O + H(+). The enzyme catalyses 5alpha-androstane-3beta,17beta-diol + reduced [NADPH--hemoprotein reductase] + O2 = 5alpha-androstane-3beta,6alpha,17beta-triol + oxidized [NADPH--hemoprotein reductase] + H2O + H(+). It catalyses the reaction 3beta-hydroxyandrost-5-en-17-one + reduced [NADPH--hemoprotein reductase] + O2 = 3beta,7alpha-dihydroxyandrost-5-en-17-one + oxidized [NADPH--hemoprotein reductase] + H2O + H(+). It carries out the reaction 3beta-hydroxy-5alpha-androstan-17-one + reduced [NADPH--hemoprotein reductase] + O2 = 3beta,7alpha-dihydroxy-5alpha-androstan-17-one + oxidized [NADPH--hemoprotein reductase] + H2O + H(+). The catalysed reaction is pregnenolone + reduced [NADPH--hemoprotein reductase] + O2 = 7alpha-hydroxypregnenolone + oxidized [NADPH--hemoprotein reductase] + H2O + H(+). It functions in the pathway lipid metabolism; bile acid biosynthesis. The protein operates within steroid hormone biosynthesis. Inhibited by drugs voriconazole and metyrapone. In terms of biological role, a cytochrome P450 monooxygenase involved in the metabolism of endogenous oxysterols and steroid hormones, including neurosteroids. Mechanistically, uses molecular oxygen inserting one oxygen atom into a substrate, and reducing the second into a water molecule, with two electrons provided by NADPH via cytochrome P450 reductase (CPR; NADPH-ferrihemoprotein reductase). Catalyzes the hydroxylation of carbon hydrogen bonds of steroids with a preference for 7-alpha position. Usually metabolizes steroids carrying a hydroxy group at position 3, functioning as a 3-hydroxy steroid 7-alpha hydroxylase. Hydroxylates oxysterols, including 25-hydroxycholesterol and (25R)-cholest-5-ene-3beta,26-diol toward 7-alpha hydroxy derivatives, which may be transported to the liver and converted to bile acids. Via its product 7-alpha,25-dihydroxycholesterol, a ligand for the chemotactic G protein-coupled receptor GPR183/EBI2, regulates B cell migration in germinal centers of lymphoid organs, thus guiding efficient maturation of plasma B cells and overall antigen-specific humoral immune response. 7-alpha hydroxylates neurosteroids, including 3beta-hydroxyandrost-5-en-17-one (dehydroepiandrosterone) and pregnenolone, both involved in hippocampus-associated memory and learning. Metabolizes androstanoids toward 6- or 7-alpha hydroxy derivatives. In Mus musculus (Mouse), this protein is Cytochrome P450 7B1.